The sequence spans 156 residues: Small ribosomal subunit protein uS7 (156 aa).

It belongs to the universal ribosomal protein uS7 family. Part of the 30S ribosomal subunit. Contacts proteins S9 and S11.

Functionally, one of the primary rRNA binding proteins, it binds directly to 16S rRNA where it nucleates assembly of the head domain of the 30S subunit. Is located at the subunit interface close to the decoding center, probably blocks exit of the E-site tRNA. This Salmonella choleraesuis (strain SC-B67) protein is Small ribosomal subunit protein uS7.